Consider the following 97-residue polypeptide: Large ribosomal subunit protein bL28 (97 aa).

It belongs to the bacterial ribosomal protein bL28 family.

This Rickettsia canadensis (strain McKiel) protein is Large ribosomal subunit protein bL28.